A 492-amino-acid polypeptide reads, in one-letter code: MAPGGGRGSKTAGYGNSDFVVVANRLPVDQERLPDGSTAWKRSPGGLVTALEPLLRRQRGAWVGWPGIVDEDVDHEDDPIVQDDLELRPVKLSADDVAEYYEGFSNATLWPLYHDVIVKPIYHREWWDRYVAVNRRFAEATSRAAARGATVWVQDYQLQLVPAMLRELRPDLTIGFFLHIPFPPVELFMQLPWRTEIVKGLLGADLVGFHLTGGAQNFLFLSRRLIGANTSRGAVGMRSRYGEVELESRVVRVGAFPISIDSTALDQTARHRDIRRRAREIRAELGNPRKVLLGVDRLDYTKGIDVRLKAFSELLAEGRAKRDDTVLVQLATPSRERVDSYQQLRNDIERQVGHINGEYGEVGHPVVHYLHRPVPRNELIAFFVAADVMLVTPLRDGMNLVAKEYVACRSDLGGALVLSEFTGAAAELRQAYLVNPHDLEGVKDTVEAALNQSVEEGRRRMRSLRRQVLAHDVDRWARSFLDALAESGPRDG.

Arg-25 contacts D-glucose 6-phosphate. 45 to 46 (GG) provides a ligand contact to UDP-alpha-D-glucose. 2 residues coordinate D-glucose 6-phosphate: Tyr-101 and Asp-155. Residues Arg-297 and Lys-302 each coordinate UDP-alpha-D-glucose. Arg-335 contacts D-glucose 6-phosphate. 400-404 (LVAKE) contacts UDP-alpha-D-glucose.

This sequence belongs to the glycosyltransferase 20 family. As to quaternary structure, homotetramer.

The catalysed reaction is ADP-alpha-D-glucose + D-glucose 6-phosphate = alpha,alpha-trehalose 6-phosphate + ADP + H(+). The enzyme catalyses CDP-alpha-D-glucose + D-glucose 6-phosphate = alpha,alpha-trehalose 6-phosphate + CDP + H(+). It catalyses the reaction GDP-alpha-D-glucose + D-glucose 6-phosphate = alpha,alpha-trehalose 6-phosphate + GDP + H(+). It carries out the reaction TDP-alpha-D-glucose + D-glucose 6-phosphate = 5-methyl-UDP + alpha,alpha-trehalose 6-phosphate + H(+). The catalysed reaction is D-glucose 6-phosphate + UDP-alpha-D-glucose = alpha,alpha-trehalose 6-phosphate + UDP + H(+). The protein operates within glycan biosynthesis; trehalose biosynthesis. Probably involved in the osmoprotection via the biosynthesis of trehalose and in the production of glycogen and alpha-glucan via the TreS-Pep2 branch involved in the biosynthesis of maltose-1-phosphate (M1P). Catalyzes the transfer of glucose from UDP-glucose (UDP-Glc) to D-glucose 6-phosphate (Glc-6-P) to form trehalose-6-phosphate. Probably also able to use ADP-Glc, CDP-Glc, GDP-Glc and TDP-Glc as glucosyl donors. This Mycolicibacterium paratuberculosis (strain ATCC BAA-968 / K-10) (Mycobacterium paratuberculosis) protein is Trehalose-6-phosphate synthase.